A 283-amino-acid polypeptide reads, in one-letter code: NAD kinase (283 aa).

The active-site Proton acceptor is aspartate 68. NAD(+) contacts are provided by residues 68-69 (DG), 142-143 (ND), arginine 153, aspartate 172, 183-188 (TAYSLS), and glutamine 242.

Belongs to the NAD kinase family. A divalent metal cation serves as cofactor.

It is found in the cytoplasm. It catalyses the reaction NAD(+) + ATP = ADP + NADP(+) + H(+). Involved in the regulation of the intracellular balance of NAD and NADP, and is a key enzyme in the biosynthesis of NADP. Catalyzes specifically the phosphorylation on 2'-hydroxyl of the adenosine moiety of NAD to yield NADP. The chain is NAD kinase from Caldanaerobacter subterraneus subsp. tengcongensis (strain DSM 15242 / JCM 11007 / NBRC 100824 / MB4) (Thermoanaerobacter tengcongensis).